The following is a 248-amino-acid chain: 2,3-bisphosphoglycerate-dependent phosphoglycerate mutase (248 aa).

Residues 8-15 (RHGESTWN), 21-22 (TG), Arg60, 87-90 (ERHY), Lys98, 114-115 (RR), and 183-184 (GN) each bind substrate. The active-site Tele-phosphohistidine intermediate is the His9. Glu87 functions as the Proton donor/acceptor in the catalytic mechanism.

This sequence belongs to the phosphoglycerate mutase family. BPG-dependent PGAM subfamily. In terms of assembly, homodimer.

It carries out the reaction (2R)-2-phosphoglycerate = (2R)-3-phosphoglycerate. The protein operates within carbohydrate degradation; glycolysis; pyruvate from D-glyceraldehyde 3-phosphate: step 3/5. Catalyzes the interconversion of 2-phosphoglycerate and 3-phosphoglycerate. This is 2,3-bisphosphoglycerate-dependent phosphoglycerate mutase from Burkholderia cenocepacia (strain ATCC BAA-245 / DSM 16553 / LMG 16656 / NCTC 13227 / J2315 / CF5610) (Burkholderia cepacia (strain J2315)).